The primary structure comprises 130 residues: MAKVQYYGTGRRKKSVARVRLVPGDGKIIINERELDDYFGLETLKTIVKQPLVLTDTLGKFDVLCKVAGGGYTGQAGAIRHGISRALLKFDEELRPALKKAGFLTRDPRMKERKKYGLKKARRAPQFSKR.

Positions 105-130 are disordered; it reads TRDPRMKERKKYGLKKARRAPQFSKR. Basic residues predominate over residues 111-130; the sequence is KERKKYGLKKARRAPQFSKR.

This sequence belongs to the universal ribosomal protein uS9 family.

The polypeptide is Small ribosomal subunit protein uS9 (Acetivibrio thermocellus (strain ATCC 27405 / DSM 1237 / JCM 9322 / NBRC 103400 / NCIMB 10682 / NRRL B-4536 / VPI 7372) (Clostridium thermocellum)).